A 224-amino-acid chain; its full sequence is Ribonuclease HII (224 aa).

Residues 7 to 217 (STIMGIDEAG…SNAVIADCLQ (211 aa)) form the RNase H type-2 domain. Positions 13, 14, and 111 each coordinate a divalent metal cation.

Belongs to the RNase HII family. It depends on Mn(2+) as a cofactor. Mg(2+) is required as a cofactor.

It is found in the cytoplasm. The catalysed reaction is Endonucleolytic cleavage to 5'-phosphomonoester.. In terms of biological role, endonuclease that specifically degrades the RNA of RNA-DNA hybrids. This Methanocella arvoryzae (strain DSM 22066 / NBRC 105507 / MRE50) protein is Ribonuclease HII.